Here is a 79-residue protein sequence, read N- to C-terminus: Beta-hexatoxin-Mg1a (79 aa).

The first 20 residues, 1–20 (MKAPATTLILVMSLISVLWA), serve as a signal peptide directing secretion. Positions 21–50 (TPDLEEGDLLAELGDLIATDDEYPMKPEER) are excised as a propeptide. 3 cysteine pairs are disulfide-bonded: C52–C66, C59–C71, and C65–C76.

Belongs to the neurotoxin 15 family. 01 (magi-5) subfamily. Expressed by the venom gland.

It is found in the secreted. Insect and vertebrate active toxin. Binds to site 4 of mammalian voltage-gated sodium channels and shifts the activation voltage of the mammalian Nav1.2a/SCN2A channel to more hyperpolarized voltages, whereas the insect channel, DmNav1 (para), is not affected. Competes for binding at site 3 of the insect sodium channel. Causes temporary paralysis when injected into lepidopteran larvae at 8.6 nmol/g. A low intracranial injection dose into mice causes lacrimation, closure of the eyes and sweating. A high injection dose causes extensive lacrimation and death. This Macrothele gigas (Japanese funnel web spider) protein is Beta-hexatoxin-Mg1a.